Consider the following 50-residue polypeptide: ITFQGCSPARQTVITNAITRARADVRAAVSALPTKAPVSTFSTWFGVYND.

The catalysed reaction is Endohydrolysis of the N-glycosidic bond at one specific adenosine on the 28S rRNA.. N-glycosylase that inhibits protein synthesis by depurinating ribosomal rRNA, and thus acts as a ribosomal inactivating protein (RIP). Has adenine polynucleotide glycosidase activity on the poly(A) substrate A30-ssDNA. Inhibits cell-free translation in rabbit reticulocyte lysate system with an IC(50) of 1 nM. May function in the defense response to pathogens. Displays antifungal activity against C.comatus and P.piricola, but not against R.solani, M.arachidicola and C.gossypii. Inhibits mycelial growth in P.piricola with an IC(50) of 2.5 uM. Has cytotoxic activity against the human cancer cell lines Hela, HepG2, and JAR, with IC(50) of 358.8, 489.8, and 926.9 nM respectively. It also inhibits HIV-1 reverse transcriptase activity (IC(50)=7.9 nM) and disrupts mouse embryonic development. The sequence is that of Ribosome-inactivating protein lyophyllin from Lyophyllum shimeji (Hon-shimeji).